Here is a 129-residue protein sequence, read N- to C-terminus: Ribonuclease P protein component (129 aa).

It belongs to the RnpA family. In terms of assembly, consists of a catalytic RNA component (M1 or rnpB) and a protein subunit.

It carries out the reaction Endonucleolytic cleavage of RNA, removing 5'-extranucleotides from tRNA precursor.. In terms of biological role, RNaseP catalyzes the removal of the 5'-leader sequence from pre-tRNA to produce the mature 5'-terminus. It can also cleave other RNA substrates such as 4.5S RNA. The protein component plays an auxiliary but essential role in vivo by binding to the 5'-leader sequence and broadening the substrate specificity of the ribozyme. This Prochlorococcus marinus (strain MIT 9515) protein is Ribonuclease P protein component.